Consider the following 976-residue polypeptide: Ephrin type-A receptor 2 (976 aa).

An N-terminal signal peptide occupies residues 1–23; sequence MELQAARACFALLWGCALAAAAA. The tract at residues 1 to 206 is mediates interaction with CLDN4; it reads MELQAARACF…YYKKCPELLQ (206 aa). Residues 24–537 are Extracellular-facing; it reads AQGKEVVLLD…SPEGSGNLAV (514 aa). Residues 28–206 enclose the Eph LBD domain; it reads EVVLLDFAAA…YYKKCPELLQ (179 aa). Cystine bridges form between C70/C188 and C105/C115. The 105-residue stretch at 328–432 folds into the Fibronectin type-III 1 domain; it reads PPSAPHYLTA…TSRSFRTASV (105 aa). Residues N407 and N435 are each glycosylated (N-linked (GlcNAc...) asparagine). The region spanning 438–529 is the Fibronectin type-III 2 domain; it reads EPPKVRLEGR…KVHEFQTLSP (92 aa). Residues 538–558 form a helical membrane-spanning segment; it reads IGGVAVGVVLLLVLAGVGFFI. Residues 559-976 are Cytoplasmic-facing; it reads HRRRKNQRAR…DQVNTVGIPI (418 aa). S570 is modified (phosphoserine). Y575 carries the post-translational modification Phosphotyrosine. Position 579 is a phosphoserine (S579). Residue Y588 is modified to Phosphotyrosine; by autocatalysis. Y594 is subject to Phosphotyrosine. Residues 606–906 are mediates interaction with ARHGEF16 and ELMO2; it reads TEIHPSCVTR…STSGSEGVPF (301 aa). The Protein kinase domain occupies 613 to 875; the sequence is VTRQKVIGAG…DIVSILDKLI (263 aa). 619-627 lines the ATP pocket; that stretch reads IGAGEFGEV. Y628 is subject to Phosphotyrosine. K646 is a binding site for ATP. Phosphothreonine is present on T647. Y735 carries the post-translational modification Phosphotyrosine; by autocatalysis. D739 serves as the catalytic Proton acceptor. Y772 is subject to Phosphotyrosine. S869 and S892 each carry phosphoserine. Residues 886-976 are negatively regulates interaction with ARHGEF16; that stretch reads DFDPRVSIRL…DQVNTVGIPI (91 aa). The residue at position 897 (S897) is a Phosphoserine; by PKB/AKT1, RPS6KA1, RPS6KA3 AND PKA. Position 901 is a phosphoserine (S901). The region spanning 904–968 is the SAM domain; sequence VPFRTVSEWL…AYSLLGLKDQ (65 aa). Y921 is subject to Phosphotyrosine; by autocatalysis. Position 930 is a phosphotyrosine (Y930). A PDZ-binding motif is present at residues 974–976; that stretch reads IPI.

The protein belongs to the protein kinase superfamily. Tyr protein kinase family. Ephrin receptor subfamily. In terms of assembly, homodimer. Interacts with SLA. Interacts (phosphorylated form) with VAV2, VAV3 and PI3-kinase p85 subunit (PIK3R1, PIK3R2 or PIK3R3); critical for the EFNA1-induced activation of RAC1 which stimulates cell migration. Interacts with INPPL1; regulates activated EPHA2 endocytosis and degradation. Interacts (inactivated form) with PTK2/FAK1 and interacts (EFNA1 ligand-activated form) with PTPN11; regulates integrin-mediated adhesion. Interacts with ARHGEF16, DOCK4 and ELMO2; mediates ligand-independent activation of RAC1 which stimulates cell migration. Interacts with CLDN4; phosphorylates CLDN4 and may regulate tight junctions. Interacts with ACP1. Interacts (via SAM domain) with ANKS1A (via SAM domain). Interacts with CEMIP. Interacts with NCK1; may regulate EPHA2 activity in cell migration and adhesion. Interacts with TIMD4. (Microbial infection) Interacts with human herpes virus 8/HHV-8 glycoprotein L/gL and glycoprotein H/gH heterodimer; this interaction triggers EPHA2 phosphorylation and endocytosis, allowing virus entry. As to quaternary structure, (Microbial infection) Interacts with human cytomegalovirus (HCMV) glycoprotein L/gL and glycoprotein H/gH heterodimer. In terms of assembly, (Microbial infection) Interacts with Epstein-Barr virus/HHV-4 glycoprotein L/gL and glycoprotein H/gH heterodimer; this interaction facilitates virus internalization and fusion. Autophosphorylates. Phosphorylated on tyrosine upon binding and activation by EFNA1. Phosphorylated residues Tyr-588 and Tyr-594 are required for binding VAV2 and VAV3 while phosphorylated residues Tyr-735 and Tyr-930 are required for binding PI3-kinase p85 subunit (PIK3R1, PIK3R2 or PIK3R3). These phosphorylated residues are critical for recruitment of VAV2 and VAV3 and PI3-kinase p85 subunit which transduce downstream signaling to activate RAC1 GTPase and cell migration. Dephosphorylation of Tyr-930 by PTPRF prevents the interaction of EPHA2 with NCK1. Phosphorylated at Ser-897 by PKB; serum-induced phosphorylation which targets EPHA2 to the cell leading edge and stimulates cell migration. Phosphorylation by PKB is inhibited by EFNA1-activated EPHA2 which regulates PKB activity via a reciprocal regulatory loop. Phosphorylated at Ser-897 in response to TNF by RPS6KA1 and RPS6KA3; RPS6KA-EPHA2 signaling pathway controls cell migration. Phosphorylated at Ser-897 by PKA; blocks cell retraction induced by EPHA2 kinase activity. Dephosphorylated by ACP1. In terms of processing, ubiquitinated by CHIP/STUB1. Ubiquitination is regulated by the HSP90 chaperone and regulates the receptor stability and activity through proteasomal degradation. ANKS1A prevents ubiquitination and degradation. Expressed in brain and glioma tissue and glioma cell lines (at protein level). Expressed most highly in tissues that contain a high proportion of epithelial cells, e.g. skin, intestine, lung, and ovary.

It localises to the cell membrane. The protein localises to the cell projection. The protein resides in the ruffle membrane. Its subcellular location is the lamellipodium membrane. It is found in the cell junction. It localises to the focal adhesion. The catalysed reaction is L-tyrosyl-[protein] + ATP = O-phospho-L-tyrosyl-[protein] + ADP + H(+). In terms of biological role, receptor tyrosine kinase which binds promiscuously membrane-bound ephrin-A family ligands residing on adjacent cells, leading to contact-dependent bidirectional signaling into neighboring cells. The signaling pathway downstream of the receptor is referred to as forward signaling while the signaling pathway downstream of the ephrin ligand is referred to as reverse signaling. Activated by the ligand ephrin-A1/EFNA1 regulates migration, integrin-mediated adhesion, proliferation and differentiation of cells. Regulates cell adhesion and differentiation through DSG1/desmoglein-1 and inhibition of the ERK1/ERK2 (MAPK3/MAPK1, respectively) signaling pathway. May also participate in UV radiation-induced apoptosis and have a ligand-independent stimulatory effect on chemotactic cell migration. During development, may function in distinctive aspects of pattern formation and subsequently in development of several fetal tissues. Involved for instance in angiogenesis, in early hindbrain development and epithelial proliferation and branching morphogenesis during mammary gland development. Engaged by the ligand ephrin-A5/EFNA5 may regulate lens fiber cells shape and interactions and be important for lens transparency development and maintenance. With ephrin-A2/EFNA2 may play a role in bone remodeling through regulation of osteoclastogenesis and osteoblastogenesis. Functionally, (Microbial infection) Acts as a receptor for hepatitis C virus (HCV) in hepatocytes and facilitates its cell entry. Mediates HCV entry by promoting the formation of the CD81-CLDN1 receptor complexes that are essential for HCV entry and by enhancing membrane fusion of cells expressing HCV envelope glycoproteins. Its function is as follows. Acts as a receptor for human cytomegalovirus (HCMV) to mediate viral entry and fusion in glioblastoma cells. The chain is Ephrin type-A receptor 2 (EPHA2) from Homo sapiens (Human).